A 312-amino-acid chain; its full sequence is tRNA uridine(34) hydroxylase (312 aa).

Residues 124-218 form the Rhodanese domain; the sequence is SDPEVLLIDT…YLEEVPEQES (95 aa). C178 functions as the Cysteine persulfide intermediate in the catalytic mechanism. Positions 293–312 are disordered; sequence AKARNQPHPIGRNYRLPSEA.

It belongs to the TrhO family.

It catalyses the reaction uridine(34) in tRNA + AH2 + O2 = 5-hydroxyuridine(34) in tRNA + A + H2O. Its function is as follows. Catalyzes oxygen-dependent 5-hydroxyuridine (ho5U) modification at position 34 in tRNAs. The protein is tRNA uridine(34) hydroxylase of Pseudomonas syringae pv. syringae (strain B728a).